The following is a 147-amino-acid chain: Hemoglobin anodic subunit beta (147 aa).

In terms of domain architecture, Globin spans 2–147 (EWTDGERTAI…VTSALARQYH (146 aa)). 2 residues coordinate heme b: His-63 and His-92.

This sequence belongs to the globin family. Heterotetramer of two alpha chains and two beta chains. As to expression, red blood cells.

Its function is as follows. Involved in oxygen transport from gills to the various peripheral tissues. This chain is Hemoglobin anodic subunit beta, found in Gymnothorax unicolor (Brown moray).